The chain runs to 299 residues: MKREEIADLMAFVVVAEERSFTRAAARLSMAQSALSQIVRRIEERLGLRLLTRTTRSVVPTEAGEHLLSVLGPMLHDIDSAMASLSDLQNRPSGTIRITTVEHAAKTILLPAMRTFLKSHPEIDIQLTIDYGLTDVVSERFDAGVRLGGEMDKDMIAIRIGPDIPMAIVGSPDYFSRRSVPTSVSQLIDHQAINLYLPTSGTANRWRLIRGGREVRVRMEGQLLLNTIDLIIDAAIDGHGLAYLPYDQVERAIKEKKLIRVLDKFTPDLPGYHLYYPHRRHAGSAFSLFIDRLKYKGAV.

The HTH lysR-type domain maps to 4–61 (EEIADLMAFVVVAEERSFTRAAARLSMAQSALSQIVRRIEERLGLRLLTRTTRSVVPT). A DNA-binding region (H-T-H motif) is located at residues 21–40 (FTRAAARLSMAQSALSQIVR).

This sequence belongs to the LysR transcriptional regulatory family.

Its function is as follows. Regulates the expression of genes involved in peptidoglycan (PG) degradation. Could play a role in switch control between recycling and degradation of PG peptides. Negatively regulates the expression of the ycjY-ymjD-ymjC-mpaA operon by binding to the PgrR-box. In addition, other genes are predicted to be under the control of PgrR, including genes related to membrane formation and function. The polypeptide is HTH-type transcriptional regulator PgrR (pgrR) (Escherichia coli (strain K12)).